A 459-amino-acid chain; its full sequence is Cysteine--tRNA ligase (459 aa).

C28 contributes to the Zn(2+) binding site. A 'HIGH' region motif is present at residues 30-40 (VTVYDLCHIGH). Residues C209, H234, and E238 each contribute to the Zn(2+) site. The 'KMSKS' region signature appears at 266–270 (KMSKS). K269 provides a ligand contact to ATP.

This sequence belongs to the class-I aminoacyl-tRNA synthetase family. As to quaternary structure, monomer. The cofactor is Zn(2+).

The protein localises to the cytoplasm. It catalyses the reaction tRNA(Cys) + L-cysteine + ATP = L-cysteinyl-tRNA(Cys) + AMP + diphosphate. The polypeptide is Cysteine--tRNA ligase (cysS) (Haemophilus influenzae (strain ATCC 51907 / DSM 11121 / KW20 / Rd)).